Reading from the N-terminus, the 459-residue chain is MGYVGNVSYPDTIPGQGNLVFEASFESGNLGRVDKVSCSEYDLFIRPDTLNNKYRVWFYFECKNASENQRAIFNIVNFSKQRTLFEMGIAAPVVKSNAQNSWARIPSRHIYYYRSSQHNDRWILSFAFIFESPDPVQFAYCIPYTYGQMQIWLNELESRKYPFFHRDLLVQTVQKRRVDLITIDATPDTFQGSKKMIFLTARVHPGESPSSHVMHGIIEFLVSKDDRAQKLRKVYCFKIIPMLNPDGVFLGNYRCSLMGHDLNRMWRTPSDWAHPSIYAVKNLLTQYDNNPQAQTVIYVDLHAHSQKPNCFLYGNVNMSAVEEKSTFRQLWLPHLLADLSEDYSLEFTQFNTDVEKAGTGRRTMGDLLSCLCYTLEVSFFSYRHTDSSGNGIQHCTPYLQYKYEALGEAFCRALLNFYEADCGLREIVLERPFKTFLPARAQKTLKKQARKVIQTVMMK.

The region spanning 142-418 (IPYTYGQMQI…AFCRALLNFY (277 aa)) is the Peptidase M14 domain. Zn(2+)-binding residues include H204, E207, and H302. E376 functions as the Proton donor/acceptor in the catalytic mechanism.

Belongs to the peptidase M14 family. Requires Zn(2+) as cofactor. As to expression, expressed in labial and amphid neurons.

It is found in the cytoplasm. The enzyme catalyses (L-glutamyl)(n+1)-gamma-L-glutamyl-L-glutamyl-[protein] + H2O = (L-glutamyl)(n)-gamma-L-glutamyl-L-glutamyl-[protein] + L-glutamate. In terms of biological role, metallocarboxypeptidase that catalyzes the removing of polyglutamate side chains that are present on the gamma-carboxyl group of glutamate residues of tubulin in sensory cilia. Probably via the deglutamylation of tubulin, promotes microtubule stability required for axon regrowth after injury. Also regulates microtubule dynamics in uterine muscle cells. This is Cytosolic carboxypeptidase 6 from Caenorhabditis elegans.